A 337-amino-acid polypeptide reads, in one-letter code: Vegetative-specific protein H5 (337 aa).

Residues 88–90 carry the Involved in the stabilization of the negatively charged intermediate by the formation of the oxyanion hole motif; sequence HGG. Active-site residues include S161, D261, and H291.

The protein belongs to the 'GDXG' lipolytic enzyme family.

The polypeptide is Vegetative-specific protein H5 (cinB) (Dictyostelium discoideum (Social amoeba)).